The sequence spans 201 residues: Large ribosomal subunit protein bL25 (201 aa).

It belongs to the bacterial ribosomal protein bL25 family. CTC subfamily. Part of the 50S ribosomal subunit; part of the 5S rRNA/L5/L18/L25 subcomplex. Contacts the 5S rRNA. Binds to the 5S rRNA independently of L5 and L18.

Functionally, this is one of the proteins that binds to the 5S RNA in the ribosome where it forms part of the central protuberance. In Burkholderia multivorans (strain ATCC 17616 / 249), this protein is Large ribosomal subunit protein bL25.